Consider the following 317-residue polypeptide: MPIKIPDDLPARPILEQEGVVVMRRTDAVRQDIRPLRIGLLNLMPNKISTETQLARLLGATPLQVELTLVRMTDHVARHTPADHMAAFYRPWAEVRDERFDGFVITGAPVEHLPFEEVGYWPELCRVLDWTQTHVHSSFTICWAAQAALHHFHGVPKHLLPAKAFGLFRHRNLAPASPYLRGFSDDPHIPVSRWAEIRQADIPAGSGLETLLDSAETGPCLLDDPAHRSLHMFNHVEYDTRSLADEYFRDGQGPLPAGYFPGDDPARPPENRWRGHAHLLFGNWINEIYRTTPFDIAAIGGGRPPANDAGPIEAAAG.

Cys142 acts as the Acyl-thioester intermediate in catalysis. Substrate is bound by residues Lys163 and Ser192. His235 (proton acceptor) is an active-site residue. Residue Glu237 is part of the active site. Arg249 is a binding site for substrate.

Belongs to the MetA family.

The protein resides in the cytoplasm. It catalyses the reaction L-homoserine + acetyl-CoA = O-acetyl-L-homoserine + CoA. It functions in the pathway amino-acid biosynthesis; L-methionine biosynthesis via de novo pathway; O-acetyl-L-homoserine from L-homoserine: step 1/1. Functionally, transfers an acetyl group from acetyl-CoA to L-homoserine, forming acetyl-L-homoserine. The polypeptide is Homoserine O-acetyltransferase (Rhizorhabdus wittichii (strain DSM 6014 / CCUG 31198 / JCM 15750 / NBRC 105917 / EY 4224 / RW1) (Sphingomonas wittichii)).